The chain runs to 169 residues: MTDSDHRLPDRPGEGDPGRGRRIGIDVGSVRVGVATSDPDGVLATPVETVRREKSSDRHVRRLAQLVTELEAVEVVVGLPRTLADRTGPAAHDAIDVAEALARRIAPVPVRMADERLTTVSAQRSLREAGVRAKGQRAMIDQVAAVGILQSWLDQRRAALAAPGEGGHG.

The span at 1-19 (MTDSDHRLPDRPGEGDPGR) shows a compositional bias: basic and acidic residues. Residues 1–24 (MTDSDHRLPDRPGEGDPGRGRRIG) form a disordered region.

It belongs to the YqgF nuclease family.

Its subcellular location is the cytoplasm. Could be a nuclease involved in processing of the 5'-end of pre-16S rRNA. The polypeptide is Putative pre-16S rRNA nuclease (Mycobacterium sp. (strain KMS)).